Consider the following 609-residue polypeptide: Thiamine metabolism regulatory protein THI3 (609 aa).

The disordered stretch occupies residues 578–598 (SKQVQEENENSSAVNTPTPEF).

It belongs to the TPP enzyme family. Mg(2+) serves as cofactor. The cofactor is thiamine diphosphate.

The protein resides in the nucleus. The catalysed reaction is 4-methyl-2-oxopentanoate + H(+) = 3-methylbutanal + CO2. The enzyme catalyses (S)-3-methyl-2-oxopentanoate + H(+) = 2-methylbutanal + CO2. Its pathway is amino-acid degradation; Ehrlich pathway. Functionally, one of five 2-oxo acid decarboxylases (PDC1, PDC5, PDC6, ARO10, and THI3) involved in amino acid catabolism. The enzyme catalyzes the decarboxylation of amino acids, which, in a first step, have been transaminated to the corresponding 2-oxo acids (alpha-keto-acids). In a third step, the resulting aldehydes are reduced to alcohols, collectively referred to as fusel oils or alcohols. Its preferred substrates are the transaminated amino acids derived from leucine (4-methyl-2-oxopentanoate, also alpha-keto-isocaproate) and isoleucine ((3S)-3-methyl-2-oxopentanoate, also alpha-keto-beta-methylvalerate), whereas transaminated valine, transaminated aromatic amino acids, and pyruvate are no substrates. In analogy to the pyruvate decarboxylases the enzyme may in a side-reaction catalyze condensation (or carboligation) reactions leading to the formation of 2-hydroxy ketone, collectively called acyloins. The enzyme is also positively regulating the thiamine metabolism by a molecular mechanism that may involve thiamine concentration sensing and signal transmission. The sequence is that of Thiamine metabolism regulatory protein THI3 (THI3) from Saccharomyces cerevisiae (strain ATCC 204508 / S288c) (Baker's yeast).